Here is a 177-residue protein sequence, read N- to C-terminus: Putative HVA22-like protein g (177 aa).

Positions 145–165 (QSTPKSKAEEKKETTIPKLDD) are disordered. Positions 150–165 (SKAEEKKETTIPKLDD) are enriched in basic and acidic residues.

This sequence belongs to the DP1 family.

This chain is Putative HVA22-like protein g (HVA22G), found in Arabidopsis thaliana (Mouse-ear cress).